The primary structure comprises 286 residues: Mycolic acid methyltransferase MmaA1 (286 aa).

Residues 32–33 (YT), 71–73 (GCG), 93–98 (TLSRNH), and 122–123 (WE) contribute to the S-adenosyl-L-methionine site. The active site involves C268.

This sequence belongs to the CFA/CMAS family.

Its pathway is lipid metabolism; mycolic acid biosynthesis. Its function is as follows. Involved in the conversion of a cis-olefin into a trans-olefin with concomitant introduction of an allylic methyl branch at the proximal position of the precursor to both the methoxy and ketomycolic acids. It directly affects the cis- to trans ratio and indirectly affects the keto to methoxy ratio. The protein is Mycolic acid methyltransferase MmaA1 (cmaD) of Mycobacterium bovis (strain ATCC BAA-935 / AF2122/97).